The sequence spans 118 residues: Immunoglobulin lambda variable 2-8 (118 aa).

An N-terminal signal peptide occupies residues 1–19; it reads MAWALLLLTLLTQGTGSWA. The residue at position 20 (Q20) is a Pyrrolidone carboxylic acid. The segment at 20–44 is framework-1; that stretch reads QSALTQPPSASGSPGQSVTISCTGT. One can recognise an Ig-like domain in the interval 20–118; that stretch reads QSALTQPPSA…CSSYAGSNNF (99 aa). The cysteines at positions 41 and 109 are disulfide-linked. The tract at residues 45-53 is complementarity-determining-1; that stretch reads SSDVGGYNY. The segment at 54–70 is framework-2; the sequence is VSWYQQHPGKAPKLMIY. The segment at 71–73 is complementarity-determining-2; the sequence is EVS. The framework-3 stretch occupies residues 74–109; that stretch reads KRPSGVPDRFSGSKSGNTASLTVSGLQAEDEADYYC. The segment at 76–97 is disordered; sequence PSGVPDRFSGSKSGNTASLTVS. Residues 85–97 are compositionally biased toward polar residues; it reads GSKSGNTASLTVS. Residues 110–118 are complementarity-determining-3; the sequence is SSYAGSNNF.

Immunoglobulins are composed of two identical heavy chains and two identical light chains; disulfide-linked.

The protein localises to the secreted. It localises to the cell membrane. V region of the variable domain of immunoglobulin light chains that participates in the antigen recognition. Immunoglobulins, also known as antibodies, are membrane-bound or secreted glycoproteins produced by B lymphocytes. In the recognition phase of humoral immunity, the membrane-bound immunoglobulins serve as receptors which, upon binding of a specific antigen, trigger the clonal expansion and differentiation of B lymphocytes into immunoglobulins-secreting plasma cells. Secreted immunoglobulins mediate the effector phase of humoral immunity, which results in the elimination of bound antigens. The antigen binding site is formed by the variable domain of one heavy chain, together with that of its associated light chain. Thus, each immunoglobulin has two antigen binding sites with remarkable affinity for a particular antigen. The variable domains are assembled by a process called V-(D)-J rearrangement and can then be subjected to somatic hypermutations which, after exposure to antigen and selection, allow affinity maturation for a particular antigen. The chain is Immunoglobulin lambda variable 2-8 from Homo sapiens (Human).